The chain runs to 799 residues: Integrin beta-1 (799 aa).

The signal sequence occupies residues 1–20 (MNLQLVFWIGLISLICSVFG). The Extracellular portion of the chain corresponds to 21–729 (QTDKNRCLKA…ETPDCPTGPD (709 aa)). Residues 26–76 (RCLKANAKSCGECIQAGPNCGWCTNTTFLQEGMPTSARCDDLEALKKKGCH) enclose the PSI domain. 28 disulfide bridges follow: Cys27/Cys45, Cys35/Cys465, Cys38/Cys64, Cys48/Cys75, Cys207/Cys213, Cys261/Cys301, Cys401/Cys415, Cys435/Cys463, Cys467/Cys487, Cys478/Cys490, Cys492/Cys501, Cys503/Cys534, Cys517/Cys532, Cys526/Cys537, Cys539/Cys554, Cys556/Cys577, Cys561/Cys575, Cys569/Cys580, Cys582/Cys591, Cys593/Cys616, Cys600/Cys614, Cys608/Cys619, Cys621/Cys631, Cys634/Cys637, Cys641/Cys692, Cys647/Cys666, Cys650/Cys662, and Cys700/Cys724. Residues Asn50, Asn94, and Asn97 are each glycosylated (N-linked (GlcNAc...) asparagine). The VWFA domain occupies 140–378 (DYPIDLYYLM…QLIIDAYNSL (239 aa)). Mg(2+) contacts are provided by Ser152 and Ser154. Positions 154, 157, 158, and 189 each coordinate Ca(2+). Positions 207–213 (CTSEQNC) are CX3CL1-binding. Asn212 carries an N-linked (GlcNAc...) asparagine glycan. Ca(2+) is bound by residues Asn244, Asp246, Pro248, and Glu249. Glu249 lines the Mg(2+) pocket. Residue Asn269 is glycosylated (N-linked (GlcNAc...) asparagine). The CX3CL1-binding stretch occupies residues 295–314 (LPNDGQCHLENNVYTMSHYY). Gly362 serves as a coordination point for Ca(2+). Asn363, Asn406, and Asn417 each carry an N-linked (GlcNAc...) asparagine glycan. The segment at 383-466 (ILENSKLPDG…VVLQFICKCN (84 aa)) is interaction with TMEM182. I-EGF domains are found at residues 467–502 (CQSH…RHCE), 503–555 (CSTD…KFCE), 556–592 (CDNF…SACD), and 593–632 (CSLD…PTCE). The N-linked (GlcNAc...) asparagine glycan is linked to Asn482. Asn521 carries an N-linked (GlcNAc...) asparagine glycan. A glycan (N-linked (GlcNAc...) asparagine) is linked at Asn585. The N-linked (GlcNAc...) asparagine glycan is linked to Asn670. A helical transmembrane segment spans residues 730–752 (IIPIVAGVVAGIVLIGLALLLIW). Over 753 to 799 (KLLMIIHDRREFAKFEKEKMNAKWDTGENPIYKSAVTTVVNPKYEGK) the chain is Cytoplasmic. The segment at 763-768 (EFAKFE) is signal for sorting from recycling endosomes; interaction with ACAP1. Thr778 carries the phosphothreonine modification. Phosphotyrosine is present on Tyr784. Ser786 carries the phosphoserine modification. The interaction with ITGB1BP1 stretch occupies residues 786 to 793 (SAVTTVVN). Phosphothreonine is present on Thr790. Position 795 is an N6-acetyllysine; alternate (Lys795). A Glycyl lysine isopeptide (Lys-Gly) (interchain with G-Cter in SUMO1); alternate cross-link involves residue Lys795.

It belongs to the integrin beta chain family. As to quaternary structure, interacts with seprase FAP (seprase); the interaction occurs at the cell surface of invadopodia membrane in a collagen-dependent manner. Heterodimer of an alpha and a beta subunit. Beta-1 associates with either alpha-1, alpha-2, alpha-3, alpha-4, alpha-5, alpha-6, alpha-7, alpha-8, alpha-9, alpha-10, alpha-11 or alpha-V. ITGA6:ITGB1 is found in a complex with CD9; interaction takes place in oocytes and is involved in sperm-egg fusion. Binds LGALS3BP and NMRK2, when associated with alpha-7, but not with alpha-5. Interacts with FLNA, FLNB, FLNC and RANBP9. Interacts with KRT1 in the presence of RACK1 and SRC. Interacts with JAML; integrin alpha-4/beta-1 may regulate leukocyte to endothelial cells adhesion by controlling JAML homodimerization. Interacts with RAB21. Interacts (via the cytoplasmic region) with RAB25 (via the hypervariable C-terminal region). Interacts with MYO10. Interacts with ITGB1BP1 (via C-terminal region); the interaction is a prerequisite for focal adhesion disassembly. Interacts with TLN1; the interaction is prevented by competitive binding of ITGB1BP1. Interacts with ACAP1; required for ITGB1 recycling. Interacts with ASAP3. Interacts with FERMT2; the interaction is inhibited in presence of ITGB1BP1. Interacts with DAB2. Interacts with FGR and HCK. Interacts with alpha-7A and alpha-7B in adult skeletal muscle. Interacts with alpha-7B in cardiomyocytes of adult heart. Interacts with EMP2; the interaction may be direct or indirect and ITGB1 has a heterodimer form. ITGA5:ITGB1 interacts with CCN3. ITGA4:ITGB1 is found in a ternary complex with CX3CR1 and CX3CL1. ITGA5:ITGB1 interacts with FBN1. ITGA5:ITGB1 acts as a receptor for fibronectin FN1 and mediates R-G-D-dependent cell adhesion to FN1. ITGA5:ITGB1 interacts with IL1B. Interacts with MDK. ITGA4:ITGB1 interacts with MDK; this interaction mediates MDK-induced osteoblast cells migration through PXN phosphorylation. ITGA6:ITGB1 interacts with MDK; this interaction mediates MDK-induced neurite-outgrowth. ITGA5:ITGB1 interacts with ACE2. Interacts with TMEM182 and LAMB1. Interacts with tensin TNS3; TNS3 also interacts with PEAK1, thus acting as an adapter molecule to bridge the association of PEAK1 with ITGB1. Interacts with tensin TNS4; the interaction displaces tensin TNS3 from the ITGB1 cytoplasmic tail and promotes ITGB1 stability. Integrin ITGA9:ITGB1 interacts with SPP1/OPN (via N-terminus). Integrin ITGA9:ITGB1 interacts with TNC/TNFN3 (via the 3rd Fibronectin type-III domain). Integrins ITGA4:ITGB1 and ITGA9:ITGB1 interact with SVEP1 (via Sushi domain 21); thereby inhibit Ca(2+) intracellular signaling and as a result repress vasocontraction. ITGA4:ITGB1 and ITGA5:ITGB1 interacts with SELP. ITGA5:ITGB1 interacts with IGFBP1. ITGA4:ITGB1 interacts with BCAM. Interacts with ADGRG6.

Its subcellular location is the cell membrane. It localises to the cell projection. The protein resides in the invadopodium membrane. It is found in the ruffle membrane. The protein localises to the recycling endosome. Its subcellular location is the melanosome. It localises to the lamellipodium. The protein resides in the ruffle. It is found in the cell junction. The protein localises to the focal adhesion. Its function is as follows. Integrins alpha-1/beta-1, alpha-2/beta-1, alpha-10/beta-1 and alpha-11/beta-1 are receptors for collagen. Integrins alpha-1/beta-1 and alpha-2/beta-2 recognize the proline-hydroxylated sequence G-F-P-G-E-R in collagen. Integrins alpha-2/beta-1, alpha-3/beta-1, alpha-4/beta-1, alpha-5/beta-1, alpha-8/beta-1, alpha-10/beta-1, alpha-11/beta-1 and alpha-V/beta-1 are receptors for fibronectin. Alpha-4/beta-1 recognizes one or more domains within the alternatively spliced CS-1 and CS-5 regions of fibronectin. Integrin alpha-5/beta-1 is a receptor for fibrinogen. Integrin alpha-1/beta-1, alpha-2/beta-1, alpha-6/beta-1 and alpha-7/beta-1 are receptors for lamimin. Integrin alpha-6/beta-1 (ITGA6:ITGB1) is present in oocytes and is involved in sperm-egg fusion. Integrin alpha-4/beta-1 is a receptor for VCAM1 and recognizes the sequence Q-I-D-S in VCAM1. Integrin alpha-9/beta-1 is a receptor for VCAM1, cytotactin and osteopontin. It recognizes the sequence A-E-I-D-G-I-E-L in cytotactin. Integrin alpha-3/beta-1 is a receptor for epiligrin, thrombospondin and CSPG4. Integrin alpha-3/beta-1 provides a docking site for FAP (seprase) at invadopodia plasma membranes in a collagen-dependent manner and hence may participate in the adhesion, formation of invadopodia and matrix degradation processes, promoting cell invasion. Alpha-3/beta-1 may mediate with LGALS3 the stimulation by CSPG4 of endothelial cells migration. Integrin alpha-V/beta-1 is a receptor for vitronectin. Beta-1 integrins recognize the sequence R-G-D in a wide array of ligands. When associated with alpha-7/beta-1 integrin, regulates cell adhesion and laminin matrix deposition. Involved in promoting endothelial cell motility and angiogenesis. Involved in osteoblast compaction through the fibronectin fibrillogenesis cell-mediated matrix assembly process and the formation of mineralized bone nodules. May be involved in up-regulation of the activity of kinases such as PKC via binding to KRT1. Together with KRT1 and RACK1, serves as a platform for SRC activation or inactivation. Plays a mechanistic adhesive role during telophase, required for the successful completion of cytokinesis. ITGA4:ITGB1 binds to fractalkine (CX3CL1) and may act as its coreceptor in CX3CR1-dependent fractalkine signaling. ITGA4:ITGB1 and ITGA5:ITGB1 bind to PLA2G2A via a site (site 2) which is distinct from the classical ligand-binding site (site 1) and this induces integrin conformational changes and enhanced ligand binding to site 1. ITGA5:ITGB1 acts as a receptor for fibrillin-1 (FBN1) and mediates R-G-D-dependent cell adhesion to FBN1. ITGA5:ITGB1 is a receptor for IL1B and binding is essential for IL1B signaling. ITGA5:ITGB3 is a receptor for soluble CD40LG and is required for CD40/CD40LG signaling. Plays an important role in myoblast differentiation and fusion during skeletal myogenesis. ITGA9:ITGB1 may play a crucial role in SVEP1/polydom-mediated myoblast cell adhesion. Integrins ITGA9:ITGB1 and ITGA4:ITGB1 repress PRKCA-mediated L-type voltage-gated channel Ca(2+) influx and ROCK-mediated calcium sensitivity in vascular smooth muscle cells via their interaction with SVEP1, thereby inhibit vasocontraction. This Rattus norvegicus (Rat) protein is Integrin beta-1 (Itgb1).